We begin with the raw amino-acid sequence, 275 residues long: Penicillin-insensitive murein endopeptidase (275 aa).

The signal sequence occupies residues M1–A19. Intrachain disulfides connect C44/C264, C187/C235, and C216/C223. Zn(2+) contacts are provided by H110, H113, D120, D147, and H211. The segment at D227–P262 is disordered. Over residues Q244 to P262 the composition is skewed to pro residues.

This sequence belongs to the peptidase M74 family. Dimer. It depends on Zn(2+) as a cofactor.

It localises to the periplasm. Functionally, murein endopeptidase that cleaves the D-alanyl-meso-2,6-diamino-pimelyl amide bond that connects peptidoglycan strands. Likely plays a role in the removal of murein from the sacculus. This Yersinia pestis bv. Antiqua (strain Antiqua) protein is Penicillin-insensitive murein endopeptidase.